The following is an 89-amino-acid chain: cAMP-regulated phosphoprotein 21 (89 aa).

The tract at residues 1–89 (MSEQGDLNQA…GGESLQDQTL (89 aa)) is disordered. N-acetylserine is present on Ser2. Over residues 9 to 25 (QAIAEEGGTEQETATPE) the composition is skewed to low complexity. The residue at position 33 (Ser33) is a Phosphoserine. The segment covering 40–53 (LELQRRLEAQNQER) has biased composition (basic and acidic residues). A Phosphoserine modification is found at Ser56.

Interacts with CALM1. In terms of processing, phosphorylation at Ser-56 favors interaction with CALM1.

It is found in the cytoplasm. In terms of biological role, may act as a competitive inhibitor of calmodulin-dependent enzymes such as calcineurin in neurons. This is cAMP-regulated phosphoprotein 21 (ARPP21) from Pongo abelii (Sumatran orangutan).